Consider the following 936-residue polypeptide: UPF0746 protein DDB_G0280787 (936 aa).

The segment covering 1 to 19 (MISNKRKEIDTIDGHHEKD) has biased composition (basic and acidic residues). Residues 1-30 (MISNKRKEIDTIDGHHEKDNDDDDSDGIDN) form a disordered region. In terms of domain architecture, SAP spans 44-78 (SGSTNYRELQIIAKSLGLASNGKKQLVYNRIEGYF). Residues 91-110 (ETNQQEEKKEEEQQQPQPQE) form a disordered region.

The protein belongs to the UPF0746 family.

This Dictyostelium discoideum (Social amoeba) protein is UPF0746 protein DDB_G0280787.